The sequence spans 804 residues: Ribonucleoside-diphosphate reductase large subunit-like protein (804 aa).

Belongs to the ribonucleoside diphosphate reductase large chain family. In terms of assembly, the genome of human herpesvirus-6 does not code for a ribonucleotide reductase small subunit.

Its subcellular location is the virion. It is found in the host cytoplasm. In terms of biological role, does not possess a ribonucleotide reductase activity. Betaherpesviruses probably use another strategy to expand the dNTP pool in a quiescent host cell. The polypeptide is Ribonucleoside-diphosphate reductase large subunit-like protein (Human herpesvirus 6B (strain Z29) (HHV-6 variant B)).